Reading from the N-terminus, the 293-residue chain is tRNA pseudouridine synthase B (293 aa).

Residue Asp-39 is the Nucleophile of the active site.

It belongs to the pseudouridine synthase TruB family. Type 1 subfamily.

It carries out the reaction uridine(55) in tRNA = pseudouridine(55) in tRNA. Functionally, responsible for synthesis of pseudouridine from uracil-55 in the psi GC loop of transfer RNAs. In Thermobifida fusca (strain YX), this protein is tRNA pseudouridine synthase B.